Here is a 383-residue protein sequence, read N- to C-terminus: Acetylornithine deacetylase (383 aa).

H80 contributes to the Zn(2+) binding site. D82 is an active-site residue. Residue D112 coordinates Zn(2+). Residue E144 is part of the active site. Zn(2+) contacts are provided by E145, E169, and H355.

The protein belongs to the peptidase M20A family. ArgE subfamily. In terms of assembly, homodimer. Zn(2+) serves as cofactor. Requires Co(2+) as cofactor. It depends on glutathione as a cofactor.

It localises to the cytoplasm. The catalysed reaction is N(2)-acetyl-L-ornithine + H2O = L-ornithine + acetate. It participates in amino-acid biosynthesis; L-arginine biosynthesis; L-ornithine from N(2)-acetyl-L-ornithine (linear): step 1/1. Functionally, catalyzes the hydrolysis of the amide bond of N(2)-acetylated L-amino acids. Cleaves the acetyl group from N-acetyl-L-ornithine to form L-ornithine, an intermediate in L-arginine biosynthesis pathway, and a branchpoint in the synthesis of polyamines. The sequence is that of Acetylornithine deacetylase from Salmonella paratyphi A (strain ATCC 9150 / SARB42).